The sequence spans 255 residues: Small ribosomal subunit protein uS2 (255 aa).

The disordered stretch occupies residues Gln230–Gly255.

The protein belongs to the universal ribosomal protein uS2 family.

This is Small ribosomal subunit protein uS2 from Rhizobium leguminosarum bv. trifolii (strain WSM2304).